The sequence spans 106 residues: Tubulin-specific chaperone A (106 aa).

Phosphoserine is present on S94.

This sequence belongs to the TBCA family.

The protein localises to the cytoplasm. It localises to the cytoskeleton. Tubulin-folding protein; involved in the early step of the tubulin folding pathway. The sequence is that of Tubulin-specific chaperone A (RBL2) from Saccharomyces cerevisiae (strain ATCC 204508 / S288c) (Baker's yeast).